Here is a 282-residue protein sequence, read N- to C-terminus: ATP phosphoribosyltransferase (282 aa).

The protein belongs to the ATP phosphoribosyltransferase family. Long subfamily. Mg(2+) is required as a cofactor.

The protein resides in the cytoplasm. The catalysed reaction is 1-(5-phospho-beta-D-ribosyl)-ATP + diphosphate = 5-phospho-alpha-D-ribose 1-diphosphate + ATP. Its pathway is amino-acid biosynthesis; L-histidine biosynthesis; L-histidine from 5-phospho-alpha-D-ribose 1-diphosphate: step 1/9. Feedback inhibited by histidine. Its function is as follows. Catalyzes the condensation of ATP and 5-phosphoribose 1-diphosphate to form N'-(5'-phosphoribosyl)-ATP (PR-ATP). Has a crucial role in the pathway because the rate of histidine biosynthesis seems to be controlled primarily by regulation of HisG enzymatic activity. The protein is ATP phosphoribosyltransferase of Haloarcula marismortui (strain ATCC 43049 / DSM 3752 / JCM 8966 / VKM B-1809) (Halobacterium marismortui).